A 128-amino-acid chain; its full sequence is Histone H2A.2 (128 aa).

The protein belongs to the histone H2A family. As to quaternary structure, the nucleosome is a histone octamer containing two molecules each of H2A, H2B, H3 and H4 assembled in one H3-H4 heterotetramer and two H2A-H2B heterodimers. The octamer wraps approximately 147 bp of DNA. In terms of tissue distribution, expressed in the generative cell within the bicellular pollen. Not detected in other reproductive or vegetative tissues.

It localises to the nucleus. It is found in the chromosome. In terms of biological role, core component of nucleosome. Nucleosomes wrap and compact DNA into chromatin, limiting DNA accessibility to the cellular machineries which require DNA as a template. Histones thereby play a central role in transcription regulation, DNA repair, DNA replication and chromosomal stability. DNA accessibility is regulated via a complex set of post-translational modifications of histones, also called histone code, and nucleosome remodeling. May be involved in the repression of gene expression in male gametes. The sequence is that of Histone H2A.2 (gH2A) from Lilium longiflorum (Trumpet lily).